Reading from the N-terminus, the 423-residue chain is Glutamyl-tRNA(Gln) amidotransferase subunit A (423 aa).

The segment at 1–20 is disordered; that stretch reads MSHNAFITEETIEPTDDGPL. The span at 10–19 shows a compositional bias: acidic residues; sequence ETIEPTDDGP. Catalysis depends on charge relay system residues Lys-28 and Ser-103. The segment at 75-108 is disordered; the sequence is EFGMGTTTETSAFGPTENPAAEGRVPGGSSGGSA. Ser-127 functions as the Acyl-ester intermediate in the catalytic mechanism. The interval 183–206 is disordered; it reads DERDGTTREPPAGQPTYADAADGD.

This sequence belongs to the amidase family. GatA subfamily. In terms of assembly, heterotrimer of A, B and C subunits.

It carries out the reaction L-glutamyl-tRNA(Gln) + L-glutamine + ATP + H2O = L-glutaminyl-tRNA(Gln) + L-glutamate + ADP + phosphate + H(+). Allows the formation of correctly charged Gln-tRNA(Gln) through the transamidation of misacylated Glu-tRNA(Gln) in organisms which lack glutaminyl-tRNA synthetase. The reaction takes place in the presence of glutamine and ATP through an activated gamma-phospho-Glu-tRNA(Gln). The protein is Glutamyl-tRNA(Gln) amidotransferase subunit A of Natronomonas pharaonis (strain ATCC 35678 / DSM 2160 / CIP 103997 / JCM 8858 / NBRC 14720 / NCIMB 2260 / Gabara) (Halobacterium pharaonis).